An 867-amino-acid polypeptide reads, in one-letter code: MIIRTLRSQLRLPKPVYISPPCRYYSTDLEKLKKESDTTESDNSASATGVIDKTHNEVLLYYDHIYPFTTSRNVVKQYLSRFSLPWSTAYDDEKLKQKVWDLSSPLETTAKITEFVPLRRDCGAFVKFKYPPEVPATKFIEEIRENVEKNEQERVNSNILTKLYHQIWRNVPKVYSVKGTPWIEDLRRFPSPKLSVKFEGDPLTEEELYVLFRRYGLINEIEPGATEAFIYFHSTRAAISAKHCITGMVLNGGKTTLHIQFVAIKRSNFLVSLISNHTKIAIPVLIALLATFAVLIFDPIREWFIEYKILHNRKSFDQFKESRWFKYLYIPYRTITGWVYSSYDYIDSQIQEVTGSSCSEEDDSSNGSNIVDGQSVRDLKNESNMFWIERYEKSKQLQLWIMENANTFIIVKGPQGSGKEEFVLEHSLGSDERLNKKVLVLECDQLGKARSDNNLINTTASQLGYFPVFTWTNTVSRFVDLGVQGLTGQKSGLSESKETQIKNMFSLATQAIRKITTNEYNKYVKSVERRNKRLKDDEKIEVLKEEQFLQQHPEAKPIIVLNKYSRRADVSSNDFIPPLVADWASGLVQNNTAHVIFLTADVGSLQLLNDALPNQVFKDISLSDASMSSSRQYVCDVLKVKDTSTLDECLEPLGGRMLDLQSFIRRIKSGESPQQAINEMISQAAELINTFFLNSHHKFGAGDSNWDPSQVWLIMKLLSECDTINYSELVKSPLFKVSKETLEILTTLEKYDLISLKRDKGVLDKISTGRPLFKAAFANIISDLRIWKLYETEYIGRLISLEAAKIQKLEEELEKIYKIGKVDGRIDYVSQKIEASNKKILDLEKQAADVASYTGKPDGKSFLGIKF.

The N-terminal 25 residues, 1–25 (MIIRTLRSQLRLPKPVYISPPCRYY), are a transit peptide targeting the mitochondrion. The Mitochondrial matrix portion of the chain corresponds to 26–279 (STDLEKLKKE…LVSLISNHTK (254 aa)). In terms of domain architecture, RRM spans 179–264 (GTPWIEDLRR…TTLHIQFVAI (86 aa)). Residues 280–300 (IAIPVLIALLATFAVLIFDPI) form a helical membrane-spanning segment. Topologically, residues 301-867 (REWFIEYKIL…DGKSFLGIKF (567 aa)) are mitochondrial intermembrane. Residues 795–852 (IGRLISLEAAKIQKLEEELEKIYKIGKVDGRIDYVSQKIEASNKKILDLEKQAADVAS) are a coiled coil.

Belongs to the YME2 family.

It is found in the mitochondrion inner membrane. Its function is as follows. Plays a role in maintaining the mitochondrial genome and in controlling the mtDNA escape. Involved in the regulation of mtDNA nucleotide structure and number. May have a dispensable role in early maturation of pre-rRNA. The sequence is that of Mitochondrial escape protein 2 (PRP13) from Candida albicans (strain SC5314 / ATCC MYA-2876) (Yeast).